The primary structure comprises 374 residues: F-box/LRR-repeat protein 8 (374 aa).

The 47-residue stretch at 2–48 (AEPGEQLPEEVLALIFRHLPLPDRAAAARVCRAWAAAATCSAVWHDT) folds into the F-box domain.

Directly interacts with SKP1 and CUL1.

Its function is as follows. Substrate-recognition component of the SCF (SKP1-CUL1-F-box protein)-type E3 ubiquitin ligase complex. The chain is F-box/LRR-repeat protein 8 (FBXL8) from Bos taurus (Bovine).